A 92-amino-acid polypeptide reads, in one-letter code: UPF0728 protein (92 aa).

This sequence belongs to the UPF0728 family.

The polypeptide is UPF0728 protein (Branchiostoma floridae (Florida lancelet)).